Reading from the N-terminus, the 78-residue chain is Small ribosomal subunit protein bS18 (78 aa).

The protein belongs to the bacterial ribosomal protein bS18 family. In terms of assembly, part of the 30S ribosomal subunit. Forms a tight heterodimer with protein bS6.

Functionally, binds as a heterodimer with protein bS6 to the central domain of the 16S rRNA, where it helps stabilize the platform of the 30S subunit. This Ligilactobacillus salivarius (strain UCC118) (Lactobacillus salivarius) protein is Small ribosomal subunit protein bS18.